Here is a 226-residue protein sequence, read N- to C-terminus: 2-C-methyl-D-erythritol 4-phosphate cytidylyltransferase (226 aa).

Belongs to the IspD/TarI cytidylyltransferase family. IspD subfamily.

The catalysed reaction is 2-C-methyl-D-erythritol 4-phosphate + CTP + H(+) = 4-CDP-2-C-methyl-D-erythritol + diphosphate. The protein operates within isoprenoid biosynthesis; isopentenyl diphosphate biosynthesis via DXP pathway; isopentenyl diphosphate from 1-deoxy-D-xylulose 5-phosphate: step 2/6. Catalyzes the formation of 4-diphosphocytidyl-2-C-methyl-D-erythritol from CTP and 2-C-methyl-D-erythritol 4-phosphate (MEP). This Haemophilus ducreyi (strain 35000HP / ATCC 700724) protein is 2-C-methyl-D-erythritol 4-phosphate cytidylyltransferase.